Here is a 112-residue protein sequence, read N- to C-terminus: Lutropin subunit beta (112 aa).

Cystine bridges form between Cys-4–Cys-52, Cys-18–Cys-67, Cys-21–Cys-105, Cys-29–Cys-83, Cys-33–Cys-85, and Cys-88–Cys-95. Asn-8 carries N-linked (GlcNAc...) asparagine glycosylation.

The protein belongs to the glycoprotein hormones subunit beta family. Heterodimer of a common alpha chain and a unique beta chain which confers biological specificity to thyrotropin, lutropin, follitropin and gonadotropin.

It is found in the secreted. The chain is Lutropin subunit beta (lhb) from Aquarana catesbeiana (American bullfrog).